The sequence spans 326 residues: tRNA-modifying protein YgfZ (326 aa).

Folate-binding residues include Trp-27 and Trp-189.

Belongs to the tRNA-modifying YgfZ family.

The protein localises to the cytoplasm. Folate-binding protein involved in regulating the level of ATP-DnaA and in the modification of some tRNAs. It is probably a key factor in regulatory networks that act via tRNA modification, such as initiation of chromosomal replication. In Shigella sonnei (strain Ss046), this protein is tRNA-modifying protein YgfZ.